A 168-amino-acid chain; its full sequence is Lipoprotein signal peptidase (168 aa).

A run of 3 helical transmembrane segments spans residues Ala15 to Leu35, Trp69 to Val89, and Pro95 to Asp115. Catalysis depends on residues Asp124 and Asp141. Residues Phe133–Leu153 form a helical membrane-spanning segment.

This sequence belongs to the peptidase A8 family.

The protein resides in the cell inner membrane. It carries out the reaction Release of signal peptides from bacterial membrane prolipoproteins. Hydrolyzes -Xaa-Yaa-Zaa-|-(S,diacylglyceryl)Cys-, in which Xaa is hydrophobic (preferably Leu), and Yaa (Ala or Ser) and Zaa (Gly or Ala) have small, neutral side chains.. It participates in protein modification; lipoprotein biosynthesis (signal peptide cleavage). Functionally, this protein specifically catalyzes the removal of signal peptides from prolipoproteins. The sequence is that of Lipoprotein signal peptidase from Caulobacter vibrioides (strain ATCC 19089 / CIP 103742 / CB 15) (Caulobacter crescentus).